The sequence spans 165 residues: Large ribosomal subunit protein uL11 (165 aa).

It belongs to the universal ribosomal protein uL11 family. Component of the large ribosomal subunit. Mature ribosomes consist of a small (40S) and a large (60S) subunit. The 40S subunit contains about 32 different proteins and 1 molecule of RNA (18S). The 60S subunit contains 45 different proteins and 3 molecules of RNA (25S, 5.8S and 5S).

Its subcellular location is the cytoplasm. Functionally, component of the ribosome, a large ribonucleoprotein complex responsible for the synthesis of proteins in the cell. The small ribosomal subunit (SSU) binds messenger RNAs (mRNAs) and translates the encoded message by selecting cognate aminoacyl-transfer RNA (tRNA) molecules. The large subunit (LSU) contains the ribosomal catalytic site termed the peptidyl transferase center (PTC), which catalyzes the formation of peptide bonds, thereby polymerizing the amino acids delivered by tRNAs into a polypeptide chain. The nascent polypeptides leave the ribosome through a tunnel in the LSU and interact with protein factors that function in enzymatic processing, targeting, and the membrane insertion of nascent chains at the exit of the ribosomal tunnel. In Candida albicans (strain SC5314 / ATCC MYA-2876) (Yeast), this protein is Large ribosomal subunit protein uL11 (RPL12).